Here is a 585-residue protein sequence, read N- to C-terminus: Aspartate--tRNA ligase (585 aa).

An L-aspartate-binding site is contributed by Glu-173. The tract at residues Gln-197–Lys-200 is aspartate. Arg-219 lines the L-aspartate pocket. ATP-binding positions include Arg-219–Glu-221 and Gln-228. His-446 provides a ligand contact to L-aspartate. Glu-480 serves as a coordination point for ATP. Arg-487 is a binding site for L-aspartate. Position 532–535 (Gly-532–Arg-535) interacts with ATP.

It belongs to the class-II aminoacyl-tRNA synthetase family. Type 1 subfamily. As to quaternary structure, homodimer.

It is found in the cytoplasm. It carries out the reaction tRNA(Asp) + L-aspartate + ATP = L-aspartyl-tRNA(Asp) + AMP + diphosphate. Its function is as follows. Catalyzes the attachment of L-aspartate to tRNA(Asp) in a two-step reaction: L-aspartate is first activated by ATP to form Asp-AMP and then transferred to the acceptor end of tRNA(Asp). The protein is Aspartate--tRNA ligase of Bacteroides fragilis (strain ATCC 25285 / DSM 2151 / CCUG 4856 / JCM 11019 / LMG 10263 / NCTC 9343 / Onslow / VPI 2553 / EN-2).